The primary structure comprises 78 residues: MSRICDLTGKRAMVGNNVSHAMNKTKRKFSVNLIKKRFYLPEEDRWITLRVAASTIKTINKNGISAVLKKAQTEGFIK.

It belongs to the bacterial ribosomal protein bL28 family.

This is Large ribosomal subunit protein bL28 from Flavobacterium psychrophilum (strain ATCC 49511 / DSM 21280 / CIP 103535 / JIP02/86).